The chain runs to 539 residues: Chaperonin GroEL (539 aa).

Residues 29–32, 86–90, Gly-413, and Asp-492 contribute to the ATP site; these read TLGP and DGTTT.

It belongs to the chaperonin (HSP60) family. Forms a cylinder of 14 subunits composed of two heptameric rings stacked back-to-back. Interacts with the co-chaperonin GroES.

It localises to the cytoplasm. The catalysed reaction is ATP + H2O + a folded polypeptide = ADP + phosphate + an unfolded polypeptide.. Functionally, together with its co-chaperonin GroES, plays an essential role in assisting protein folding. The GroEL-GroES system forms a nano-cage that allows encapsulation of the non-native substrate proteins and provides a physical environment optimized to promote and accelerate protein folding. The chain is Chaperonin GroEL from Fusobacterium nucleatum subsp. polymorphum (Fusobacterium polymorphum).